The chain runs to 252 residues: Chitooligosaccharide deacetylase (252 aa).

Mg(2+)-binding residues include histidine 61 and histidine 125.

Belongs to the YdjC deacetylase family. ChbG subfamily. In terms of assembly, homodimer. Mg(2+) serves as cofactor.

The protein resides in the cytoplasm. It carries out the reaction N,N'-diacetylchitobiose + H2O = N-acetyl-beta-D-glucosaminyl-(1-&gt;4)-D-glucosamine + acetate. The enzyme catalyses diacetylchitobiose-6'-phosphate + H2O = N'-monoacetylchitobiose-6'-phosphate + acetate. Its pathway is glycan degradation; chitin degradation. Its function is as follows. Involved in the degradation of chitin. ChbG is essential for growth on the acetylated chitooligosaccharides chitobiose and chitotriose but is dispensable for growth on cellobiose and chitosan dimer, the deacetylated form of chitobiose. Deacetylation of chitobiose-6-P and chitotriose-6-P is necessary for both the activation of the chb promoter by the regulatory protein ChbR and the hydrolysis of phosphorylated beta-glucosides by the phospho-beta-glucosidase ChbF. Catalyzes the removal of only one acetyl group from chitobiose-6-P to yield monoacetylchitobiose-6-P, the inducer of ChbR and the substrate of ChbF. The sequence is that of Chitooligosaccharide deacetylase from Salmonella enteritidis PT4 (strain P125109).